Reading from the N-terminus, the 565-residue chain is Oxygen-dependent choline dehydrogenase (565 aa).

Residue 6 to 35 (DYIIVGAGSAGNTLATRLTEDASVSVLLLE) participates in FAD binding. The segment at 182–203 (QQEGFGPMDRSVTKKGRRSSTA) is disordered. His-475 serves as the catalytic Proton acceptor.

The protein belongs to the GMC oxidoreductase family. FAD serves as cofactor.

It catalyses the reaction choline + A = betaine aldehyde + AH2. It carries out the reaction betaine aldehyde + NAD(+) + H2O = glycine betaine + NADH + 2 H(+). The protein operates within amine and polyamine biosynthesis; betaine biosynthesis via choline pathway; betaine aldehyde from choline (cytochrome c reductase route): step 1/1. Functionally, involved in the biosynthesis of the osmoprotectant glycine betaine. Catalyzes the oxidation of choline to betaine aldehyde and betaine aldehyde to glycine betaine at the same rate. The chain is Oxygen-dependent choline dehydrogenase from Pseudomonas entomophila (strain L48).